The primary structure comprises 203 residues: Thymidylate kinase (203 aa).

10–17 (GTEGSGKS) provides a ligand contact to ATP.

It belongs to the thymidylate kinase family.

It catalyses the reaction dTMP + ATP = dTDP + ADP. Phosphorylation of dTMP to form dTDP in both de novo and salvage pathways of dTTP synthesis. This Dichelobacter nodosus (strain VCS1703A) protein is Thymidylate kinase.